Here is a 389-residue protein sequence, read N- to C-terminus: PqqA peptide cyclase (389 aa).

One can recognise a Radical SAM core domain in the interval 19 to 235; it reads VGLPLWLLAE…NEYRVRLEAE (217 aa). Residues C33, C37, and C40 each coordinate [4Fe-4S] cluster.

It belongs to the radical SAM superfamily. PqqE family. Interacts with PqqD. The interaction is necessary for activity of PqqE. The cofactor is [4Fe-4S] cluster.

The catalysed reaction is [PQQ precursor protein] + S-adenosyl-L-methionine = E-Y cross-linked-[PQQ precursor protein] + 5'-deoxyadenosine + L-methionine + H(+). Its pathway is cofactor biosynthesis; pyrroloquinoline quinone biosynthesis. Functionally, catalyzes the cross-linking of a glutamate residue and a tyrosine residue in the PqqA protein as part of the biosynthesis of pyrroloquinoline quinone (PQQ). This Pseudomonas savastanoi pv. phaseolicola (strain 1448A / Race 6) (Pseudomonas syringae pv. phaseolicola (strain 1448A / Race 6)) protein is PqqA peptide cyclase.